Here is a 284-residue protein sequence, read N- to C-terminus: tRNA-cytidine(32) 2-sulfurtransferase (284 aa).

A PP-loop motif motif is present at residues 44 to 49 (SGGKDS). 3 residues coordinate [4Fe-4S] cluster: Cys119, Cys122, and Cys210.

This sequence belongs to the TtcA family. As to quaternary structure, homodimer. Mg(2+) is required as a cofactor. The cofactor is [4Fe-4S] cluster.

Its subcellular location is the cytoplasm. The catalysed reaction is cytidine(32) in tRNA + S-sulfanyl-L-cysteinyl-[cysteine desulfurase] + AH2 + ATP = 2-thiocytidine(32) in tRNA + L-cysteinyl-[cysteine desulfurase] + A + AMP + diphosphate + H(+). The protein operates within tRNA modification. In terms of biological role, catalyzes the ATP-dependent 2-thiolation of cytidine in position 32 of tRNA, to form 2-thiocytidine (s(2)C32). The sulfur atoms are provided by the cysteine/cysteine desulfurase (IscS) system. The protein is tRNA-cytidine(32) 2-sulfurtransferase of Chromohalobacter salexigens (strain ATCC BAA-138 / DSM 3043 / CIP 106854 / NCIMB 13768 / 1H11).